Consider the following 354-residue polypeptide: Histidinol-phosphate aminotransferase (354 aa).

Lysine 222 carries the N6-(pyridoxal phosphate)lysine modification.

The protein belongs to the class-II pyridoxal-phosphate-dependent aminotransferase family. Histidinol-phosphate aminotransferase subfamily. As to quaternary structure, homodimer. It depends on pyridoxal 5'-phosphate as a cofactor.

It catalyses the reaction L-histidinol phosphate + 2-oxoglutarate = 3-(imidazol-4-yl)-2-oxopropyl phosphate + L-glutamate. The protein operates within amino-acid biosynthesis; L-histidine biosynthesis; L-histidine from 5-phospho-alpha-D-ribose 1-diphosphate: step 7/9. The polypeptide is Histidinol-phosphate aminotransferase (Staphylococcus carnosus (strain TM300)).